The sequence spans 524 residues: Cytochrome P450 monooxygenase lnaC (524 aa).

The chain crosses the membrane as a helical span at residues 16–36 (ALAVSCIAVSLFLLSPWIAYA). A glycan (N-linked (GlcNAc...) asparagine) is linked at Asn150. A heme-binding site is contributed by Cys471.

Belongs to the cytochrome P450 family. It depends on heme as a cofactor.

It localises to the membrane. It participates in secondary metabolite biosynthesis. Its function is as follows. Cytochrome P450 monooxygenase; part of the lna gene cluster that mediates the biosynthesis of diastereomeric piperazines. Lna and lnb clusters encode sets of enzymes that produce overlapping sets of previously undescribed metabolites such as piperazinomycin-like metabolites or morpholine. The lna and lnb biosynthetic pathways appear to be part of a signaling network that controls the formation of sclerotia, a resilient overwintering structure. One primary function of the non-canonical nonribosomal peptide synthetases lnaA and lnbA consists in the reduction of L-tyrosine. The presence in the clusters of tailoring enzymes such as the oxidoreductases lnaB, lnbB, lnaE or lnbE, as well as of the cytochrome P450 monooxygenases lnaC, lnaD, or lnbC, might explain formation of various diastereomeric piperazines. The chain is Cytochrome P450 monooxygenase lnaC from Aspergillus flavus (strain ATCC 200026 / FGSC A1120 / IAM 13836 / NRRL 3357 / JCM 12722 / SRRC 167).